A 253-amino-acid chain; its full sequence is Lys-63-specific deubiquitinase BRCC36 (253 aa).

In terms of domain architecture, MPN spans 9–145 (VELQTDVYMV…KEHEIFLNCF (137 aa)). Zn(2+) is bound by residues His94, His96, and Asp107. Positions 94–107 (HSHPHITVCPSHVD) match the JAMM motif motif. Positions 227–249 (EKRIALNKLRATHLQRQLQELQK) form a coiled coil.

It belongs to the peptidase M67A family. BRCC36 subfamily. As to quaternary structure, component of the BRISC complex, at least composed of ABRAXAS2, BRCC3/BRCC36, BABAM2 and BABAM1/NBA1. Within the complex, interacts directly with ABRAXAS2. The heterodimer with ABRAXAS2 assembles into a heterotetramer. The BRISC complex binds polyubiquitin. Zn(2+) is required as a cofactor.

It is found in the cytoplasm. The protein localises to the nucleus. The protein resides in the cytoskeleton. Its subcellular location is the spindle pole. Its function is as follows. Metalloprotease that specifically cleaves 'Lys-63'-linked polyubiquitin chains, leaving the last ubiquitin chain attached to its substrates. Catalytic subunit of the BRISC complex; does not have activity by itself, but needs to be associated into a heterotetramer with ABRAXAS2 for minimal in vitro activity. Plays a role in regulating the onset of apoptosis via its role in modulating 'Lys-63'-linked ubiquitination of target proteins. Required for normal mitotic spindle assembly and microtubule attachment to kinetochores via its role in deubiquitinating spindle assembly factors. This is Lys-63-specific deubiquitinase BRCC36 from Camponotus floridanus (Florida carpenter ant).